We begin with the raw amino-acid sequence, 90 residues long: Chromosomal protein MC1c (90 aa).

Functionally, protects DNA against thermal denaturation and modulates transcription. The chain is Chromosomal protein MC1c from Methanothrix soehngenii (Methanosaeta concilii).